We begin with the raw amino-acid sequence, 127 residues long: MORF4 family-associated protein 1 (127 aa).

A coiled-coil region spans residues 92–126 (RAAKRCEKAEEKAKEIAKMAEMLVELVRRIEKSES).

This sequence belongs to the MORF4 family-associated protein family. In terms of assembly, found in a complex composed of MORF4L1, MRFAP1 and RB1. Interacts via its N-terminus with MORF4L1. Interacts with CSTB and MORF4L2.

The protein localises to the nucleus. The protein resides in the cytoplasm. It is found in the perinuclear region. The sequence is that of MORF4 family-associated protein 1 from Homo sapiens (Human).